Reading from the N-terminus, the 89-residue chain is Small ribosomal subunit protein uS17 (89 aa).

Belongs to the universal ribosomal protein uS17 family. Part of the 30S ribosomal subunit.

Its function is as follows. One of the primary rRNA binding proteins, it binds specifically to the 5'-end of 16S ribosomal RNA. The protein is Small ribosomal subunit protein uS17 of Nocardia farcinica (strain IFM 10152).